Consider the following 140-residue polypeptide: MLDINQIKEIIPHRYPFLLVDRILSVEDGRKAVGLKNVSANEPYFQGHFPGYPVMPGVLIIEAMAQVGAVAVLRLPEFAGKMAFFAGIDRARFRRQVVPGDQLRIEVELQKLRGTVGKARGAAYVGQELAAEAELMFAVR.

His48 is a catalytic residue.

This sequence belongs to the thioester dehydratase family. FabZ subfamily.

It localises to the cytoplasm. The enzyme catalyses a (3R)-hydroxyacyl-[ACP] = a (2E)-enoyl-[ACP] + H2O. Its function is as follows. Involved in unsaturated fatty acids biosynthesis. Catalyzes the dehydration of short chain beta-hydroxyacyl-ACPs and long chain saturated and unsaturated beta-hydroxyacyl-ACPs. The polypeptide is 3-hydroxyacyl-[acyl-carrier-protein] dehydratase FabZ (Pelotomaculum thermopropionicum (strain DSM 13744 / JCM 10971 / SI)).